Here is a 564-residue protein sequence, read N- to C-terminus: E3 ubiquitin-protein ligase RNF168 (564 aa).

The RING-type zinc finger occupies 16 to 55 (CGICMEILVEPVTLPCNHTLCNPCFQSTVEKANLCCPFCR). At serine 70 the chain carries Phosphoserine. The LR motif 1 motif lies at 110–128 (LSKPGELRREYEEEISKVE). Serine 134 is subject to Phosphoserine. The UMI motif motif lies at 143–151 (EEYIQRLLA). Disordered regions lie at residues 149–179 (LLAE…EELA) and 193–291 (NILA…QGPE). The span at 157-179 (EKRRTERRRSEMEEQLRGDEELA) shows a compositional bias: basic and acidic residues. The short motif at 168–191 (MEEQLRGDEELARRLSTSINSNYE) is the MIU motif 1 element. Serine 197 is subject to Phosphoserine. Residue lysine 210 forms a Glycyl lysine isopeptide (Lys-Gly) (interchain with G-Cter in SUMO2) linkage. Basic and acidic residues predominate over residues 242-259 (KTEHGEDMCKSKETDSSD). Over residues 275-288 (PTHSPQTCPETQGQ) the composition is skewed to polar residues. Phosphothreonine occurs at positions 348 and 361. Phosphoserine occurs at positions 413 and 414. The MIU motif 2 motif lies at 438-461 (RHKQEEQDRLLALQLQKEADKEKM). The interval 455–564 (EADKEKMVPN…QKSILQMFQR (110 aa)) is disordered. Residues 465–476 (RQKGSPDQYQLR) carry the LR motif 2 motif. Positions 466 to 480 (QKGSPDQYQLRTSSP) are enriched in polar residues. Serine 469 carries the phosphoserine modification. The segment covering 491 to 515 (NVKDRNSPKQTADRSKSQRSRKGEY) has biased composition (basic and acidic residues). Polar residues-rich tracts occupy residues 519–531 (FEST…NGTK) and 555–564 (QKSILQMFQR). Lysine 524 is covalently cross-linked (Glycyl lysine isopeptide (Lys-Gly) (interchain with G-Cter in SUMO2)).

Belongs to the RNF168 family. As to quaternary structure, monomer. Interacts with UBE2N/UBC13. Post-translationally, sumoylated with SUMO1 by PIAS4 in response to double-strand breaks (DSBs). In terms of processing, ubiquitinated.

The protein resides in the nucleus. It catalyses the reaction S-ubiquitinyl-[E2 ubiquitin-conjugating enzyme]-L-cysteine + [acceptor protein]-L-lysine = [E2 ubiquitin-conjugating enzyme]-L-cysteine + N(6)-ubiquitinyl-[acceptor protein]-L-lysine.. Its pathway is protein modification; protein ubiquitination. Functionally, E3 ubiquitin-protein ligase required for accumulation of repair proteins to sites of DNA damage. Acts with UBE2N/UBC13 to amplify the RNF8-dependent histone ubiquitination. Recruited to sites of DNA damage at double-strand breaks (DSBs) by binding to ubiquitinated histone H2A and H2AX and amplifies the RNF8-dependent H2A ubiquitination, promoting the formation of 'Lys-63'-linked ubiquitin conjugates. This leads to concentrate ubiquitinated histones H2A and H2AX at DNA lesions to the threshold required for recruitment of TP53BP1 and BRCA1. Also recruited at DNA interstrand cross-links (ICLs) sites and promotes accumulation of 'Lys-63'-linked ubiquitination of histones H2A and H2AX, leading to recruitment of FAAP20 and Fanconi anemia (FA) complex, followed by interstrand cross-link repair. H2A ubiquitination also mediates the ATM-dependent transcriptional silencing at regions flanking DSBs in cis, a mechanism to avoid collision between transcription and repair intermediates. Also involved in class switch recombination in immune system, via its role in regulation of DSBs repair. Following DNA damage, promotes the ubiquitination and degradation of JMJD2A/KDM4A in collaboration with RNF8, leading to unmask H4K20me2 mark and promote the recruitment of TP53BP1 at DNA damage sites. Not able to initiate 'Lys-63'-linked ubiquitination in vitro; possibly due to partial occlusion of the UBE2N/UBC13-binding region. Catalyzes monoubiquitination of 'Lys-13' and 'Lys-15' of nucleosomal histone H2A (H2AK13Ub and H2AK15Ub, respectively). The protein is E3 ubiquitin-protein ligase RNF168 of Rattus norvegicus (Rat).